The following is a 333-amino-acid chain: Biotin synthase (333 aa).

The 230-residue stretch at 46-275 (YYGKKVKLNM…TKEIRISGGR (230 aa)) folds into the Radical SAM core domain. C64, C68, and C71 together coordinate [4Fe-4S] cluster. Residues C108, C140, C200, and R270 each coordinate [2Fe-2S] cluster.

The protein belongs to the radical SAM superfamily. Biotin synthase family. In terms of assembly, homodimer. It depends on [4Fe-4S] cluster as a cofactor. [2Fe-2S] cluster is required as a cofactor.

The catalysed reaction is (4R,5S)-dethiobiotin + (sulfur carrier)-SH + 2 reduced [2Fe-2S]-[ferredoxin] + 2 S-adenosyl-L-methionine = (sulfur carrier)-H + biotin + 2 5'-deoxyadenosine + 2 L-methionine + 2 oxidized [2Fe-2S]-[ferredoxin]. It functions in the pathway cofactor biosynthesis; biotin biosynthesis; biotin from 7,8-diaminononanoate: step 2/2. In terms of biological role, catalyzes the conversion of dethiobiotin (DTB) to biotin by the insertion of a sulfur atom into dethiobiotin via a radical-based mechanism. The sequence is that of Biotin synthase from Halalkalibacterium halodurans (strain ATCC BAA-125 / DSM 18197 / FERM 7344 / JCM 9153 / C-125) (Bacillus halodurans).